The sequence spans 345 residues: MRVTDFSFDLPDELIARYPMAQRNASRLLTLDGNTGTLADKQFTDLLGMINPGDLMVFNNTRVIPARLFGQKASGGKLEILVERMLDDKRILAHVRSSKSPKVDSIIHLDGGYEMKMAARHDALFELELLSDLTILEVLEAVGHMPLPPYIDRPDEDADKERYQTVYNQNPGAVAAPTAGLHFDDAMLDALKAKGVNIAFVTLHVGAGTFQPVRVDNVLEHKMHSEWANVPQDVVDLIAQTKAAGKRVVAVGTTSVRSLESAARASEGELKAFSGDTDIFIYPGYQFQIVDAMITNFHLPESTLIMLVSAFAGFDHVMAAYQHAITQKYRFFSYGDAMFVTKKAH.

The protein belongs to the QueA family. In terms of assembly, monomer.

The protein localises to the cytoplasm. It carries out the reaction 7-aminomethyl-7-carbaguanosine(34) in tRNA + S-adenosyl-L-methionine = epoxyqueuosine(34) in tRNA + adenine + L-methionine + 2 H(+). It functions in the pathway tRNA modification; tRNA-queuosine biosynthesis. In terms of biological role, transfers and isomerizes the ribose moiety from AdoMet to the 7-aminomethyl group of 7-deazaguanine (preQ1-tRNA) to give epoxyqueuosine (oQ-tRNA). The protein is S-adenosylmethionine:tRNA ribosyltransferase-isomerase of Shewanella sp. (strain MR-4).